A 527-amino-acid polypeptide reads, in one-letter code: Secologanin synthase 2 (527 aa).

The Lumenal portion of the chain corresponds to 1–11 (MEMDMDIIRKA). A helical membrane pass occupies residues 12-32 (IAATIFALVMAWAWRVLDWAW). Residues 33 to 527 (FTPKRIEKRL…IYKKLERQNF (495 aa)) are Cytoplasmic-facing. Heme is bound at residue Cys470.

The protein belongs to the cytochrome P450 family. It depends on heme as a cofactor. As to expression, expressed in leaves (especially in leaf epidermis), and, to a lower extent, in roots, stems, flower buds and flowers.

Its subcellular location is the endoplasmic reticulum membrane. The catalysed reaction is loganin + reduced [NADPH--hemoprotein reductase] + O2 = secologanin + oxidized [NADPH--hemoprotein reductase] + 2 H2O + H(+). The enzyme catalyses secologanin + reduced [NADPH--hemoprotein reductase] + O2 = secoxyloganin + oxidized [NADPH--hemoprotein reductase] + H2O + 2 H(+). It participates in alkaloid biosynthesis. In terms of biological role, component of the seco-iridoid and derivatives monoterpenoid indole alkaloids (MIAs, e.g. secologanin) biosynthesis pathway. Catalyzes the conversion of loganin into secologanin. Catalyzes the conversion of secologanin into secoxyloganin. The chain is Secologanin synthase 2 from Catharanthus roseus (Madagascar periwinkle).